An 869-amino-acid chain; its full sequence is Probable inorganic carbon transporter subunit DabA (869 aa).

Residues 1-32 form a disordered region; sequence MSTATLEQRAKRGEAPRANDAGHCAHPADGAR. Residues 8-17 show a composition bias toward basic and acidic residues; that stretch reads QRAKRGEAPR. The Zn(2+) site is built by Cys-376, Asp-378, His-555, and Cys-570.

Belongs to the inorganic carbon transporter (TC 9.A.2) DabA family. Forms a complex with DabB. Requires Zn(2+) as cofactor.

Its subcellular location is the cell inner membrane. In terms of biological role, part of an energy-coupled inorganic carbon pump. This Burkholderia multivorans (strain ATCC 17616 / 249) protein is Probable inorganic carbon transporter subunit DabA.